The chain runs to 344 residues: uncharacterized protein (344 aa).

Positions 1–20 (MEIRIMLFILMMMVMPVSYA) are cleaved as a signal peptide.

The protein belongs to the fimbrial protein family.

Its function is as follows. Part of the yehABCD fimbrial operon. Could contribute to adhesion to various surfaces in specific environmental niches. This is an uncharacterized protein from Escherichia coli (strain K12).